Reading from the N-terminus, the 727-residue chain is Prolyl endopeptidase-like (727 aa).

N-acetylmethionine is present on M1. Residues S559, D645, and H690 each act as charge relay system in the active site.

This sequence belongs to the peptidase S9A family. In terms of assembly, homodimer. Interacts with the AP-1 complex. As to expression, expressed in pyramidal neurons of the temporal cortex and neocortex (at protein level). Widely expressed. Expressed at higher level in brain, skeletal muscle, heart and kidney. Expressed at the endplates in the neuromuscular junction.

The protein localises to the cytoplasm. It is found in the cytosol. It localises to the golgi apparatus. Its subcellular location is the trans-Golgi network. The protein resides in the cytoskeleton. The protein localises to the nucleus. Its activity is regulated as follows. Inhibited by PMSF and Prefabloc, as well as leupeptin at high concentrations. Partially inhibited by TPCK, a chymotrypsin inhibitor and E64, a cysteine protease inhibitor. Not affected by 4-amidinophenyl-methanesulfonyl fluoride (APMSF), pepstatin or EDTA. Inhibited by 1-isobutyl-3-oxo-3,5,6,7-tetrahydro-2H-cyclopenta[c]pyridine-4-carbonitrile. Its function is as follows. Serine peptidase whose precise substrate specificity remains unclear. Does not cleave peptides after a arginine or lysine residue. Regulates trans-Golgi network morphology and sorting by regulating the membrane binding of the AP-1 complex. May play a role in the regulation of synaptic vesicle exocytosis. In Homo sapiens (Human), this protein is Prolyl endopeptidase-like (PREPL).